A 425-amino-acid polypeptide reads, in one-letter code: Enolase (425 aa).

Gln-163 is a binding site for (2R)-2-phosphoglycerate. The Proton donor role is filled by Glu-205. Asp-242, Glu-285, and Asp-312 together coordinate Mg(2+). Residues Lys-337, Arg-366, Ser-367, and Lys-388 each coordinate (2R)-2-phosphoglycerate. Lys-337 acts as the Proton acceptor in catalysis.

This sequence belongs to the enolase family. Mg(2+) serves as cofactor.

It localises to the cytoplasm. It is found in the secreted. The protein localises to the cell surface. The enzyme catalyses (2R)-2-phosphoglycerate = phosphoenolpyruvate + H2O. The protein operates within carbohydrate degradation; glycolysis; pyruvate from D-glyceraldehyde 3-phosphate: step 4/5. Catalyzes the reversible conversion of 2-phosphoglycerate (2-PG) into phosphoenolpyruvate (PEP). It is essential for the degradation of carbohydrates via glycolysis. The polypeptide is Enolase (Acidiphilium cryptum (strain JF-5)).